A 353-amino-acid polypeptide reads, in one-letter code: Photosystem II protein D1 (353 aa).

At T2 the chain carries N-acetylthreonine. T2 carries the post-translational modification Phosphothreonine. Transmembrane regions (helical) follow at residues 29–46 (YIGW…TATS), 118–133 (HFLL…EWEL), and 142–156 (WIAV…AATA). Position 118 (H118) interacts with chlorophyll a. Y126 provides a ligand contact to pheophytin a. 2 residues coordinate [CaMn4O5] cluster: D170 and E189. The chain crosses the membrane as a helical span at residues 197-218 (FHMLGVAGVFGGSLFSAMHGSL). H198 provides a ligand contact to chlorophyll a. A quinone is bound by residues H215 and 264-265 (SF). Position 215 (H215) interacts with Fe cation. H272 is a Fe cation binding site. A helical membrane pass occupies residues 274 to 288 (FLAAWPVVGIWFTAL). The [CaMn4O5] cluster site is built by H332, E333, D342, and A344. Positions 345–353 (AVEAPSING) are excised as a propeptide.

It belongs to the reaction center PufL/M/PsbA/D family. As to quaternary structure, PSII is composed of 1 copy each of membrane proteins PsbA, PsbB, PsbC, PsbD, PsbE, PsbF, PsbH, PsbI, PsbJ, PsbK, PsbL, PsbM, PsbT, PsbX, PsbY, PsbZ, Psb30/Ycf12, at least 3 peripheral proteins of the oxygen-evolving complex and a large number of cofactors. It forms dimeric complexes. Requires The D1/D2 heterodimer binds P680, chlorophylls that are the primary electron donor of PSII, and subsequent electron acceptors. It shares a non-heme iron and each subunit binds pheophytin, quinone, additional chlorophylls, carotenoids and lipids. D1 provides most of the ligands for the Mn4-Ca-O5 cluster of the oxygen-evolving complex (OEC). There is also a Cl(-1) ion associated with D1 and D2, which is required for oxygen evolution. The PSII complex binds additional chlorophylls, carotenoids and specific lipids. as cofactor. Post-translationally, tyr-161 forms a radical intermediate that is referred to as redox-active TyrZ, YZ or Y-Z. In terms of processing, C-terminally processed by CTPA; processing is essential to allow assembly of the oxygen-evolving complex and thus photosynthetic growth.

It localises to the plastid. The protein localises to the chloroplast thylakoid membrane. The catalysed reaction is 2 a plastoquinone + 4 hnu + 2 H2O = 2 a plastoquinol + O2. Functionally, photosystem II (PSII) is a light-driven water:plastoquinone oxidoreductase that uses light energy to abstract electrons from H(2)O, generating O(2) and a proton gradient subsequently used for ATP formation. It consists of a core antenna complex that captures photons, and an electron transfer chain that converts photonic excitation into a charge separation. The D1/D2 (PsbA/PsbD) reaction center heterodimer binds P680, the primary electron donor of PSII as well as several subsequent electron acceptors. The protein is Photosystem II protein D1 of Medicago sativa (Alfalfa).